A 249-amino-acid chain; its full sequence is 5'-nucleotidase SurE (249 aa).

Residues Asp-8, Asp-9, Ser-39, and Asn-91 each contribute to the a divalent metal cation site.

Belongs to the SurE nucleotidase family. A divalent metal cation is required as a cofactor.

It localises to the cytoplasm. The catalysed reaction is a ribonucleoside 5'-phosphate + H2O = a ribonucleoside + phosphate. Nucleotidase that shows phosphatase activity on nucleoside 5'-monophosphates. The protein is 5'-nucleotidase SurE of Haemophilus influenzae (strain ATCC 51907 / DSM 11121 / KW20 / Rd).